The chain runs to 227 residues: PKHD-type hydroxylase ACICU_00484 (227 aa).

Residues 78–178 enclose the Fe2OG dioxygenase domain; the sequence is DIIPPLFNRY…RIASFFWVQS (101 aa). 3 residues coordinate Fe cation: histidine 96, aspartate 98, and histidine 159. Arginine 169 provides a ligand contact to 2-oxoglutarate.

It depends on Fe(2+) as a cofactor. L-ascorbate serves as cofactor.

This chain is PKHD-type hydroxylase ACICU_00484, found in Acinetobacter baumannii (strain ACICU).